The following is a 594-amino-acid chain: Alpha-1,4-glucan:maltose-1-phosphate maltosyltransferase (594 aa).

Positions 244 to 270 (NRKGRNNSLTPGPDDPGSPYAIGSEEG) are disordered. Alpha-maltose 1-phosphate-binding residues include Lys-246, Gln-306, and Asp-341. Asp-377 functions as the Nucleophile in the catalytic mechanism. Asn-378 contacts alpha-maltose 1-phosphate. Catalysis depends on Glu-406, which acts as the Proton donor. 517-518 (KY) is an alpha-maltose 1-phosphate binding site.

The protein belongs to the glycosyl hydrolase 13 family. GlgE subfamily. In terms of assembly, homodimer.

It carries out the reaction alpha-maltose 1-phosphate + [(1-&gt;4)-alpha-D-glucosyl](n) = [(1-&gt;4)-alpha-D-glucosyl](n+2) + phosphate. Its function is as follows. Maltosyltransferase that uses maltose 1-phosphate (M1P) as the sugar donor to elongate linear or branched alpha-(1-&gt;4)-glucans. Is involved in a branched alpha-glucan biosynthetic pathway from trehalose, together with TreS, Mak and GlgB. This Cereibacter sphaeroides (Rhodobacter sphaeroides) protein is Alpha-1,4-glucan:maltose-1-phosphate maltosyltransferase.